A 342-amino-acid chain; its full sequence is Predicted GPI-anchored protein 54 (342 aa).

A signal peptide spans 1-16; sequence MRANYLLLLAATAVQA. N-linked (GlcNAc...) asparagine glycosylation is found at N25, N105, and N151. G314 is lipidated: GPI-anchor amidated glycine. A propeptide spans 315-342 (removed in mature form); that stretch reads ASQSHPISSYSNYTISDYAPPISSYYSL. A glycan (N-linked (GlcNAc...) asparagine) is linked at N326.

It is found in the cell membrane. In Candida albicans (strain SC5314 / ATCC MYA-2876) (Yeast), this protein is Predicted GPI-anchored protein 54 (PGA54).